The following is a 429-amino-acid chain: Glutamate-1-semialdehyde 2,1-aminomutase (429 aa).

An N6-(pyridoxal phosphate)lysine modification is found at Lys-267.

Belongs to the class-III pyridoxal-phosphate-dependent aminotransferase family. HemL subfamily. As to quaternary structure, homodimer. Pyridoxal 5'-phosphate serves as cofactor.

It localises to the cytoplasm. The enzyme catalyses (S)-4-amino-5-oxopentanoate = 5-aminolevulinate. Its pathway is porphyrin-containing compound metabolism; protoporphyrin-IX biosynthesis; 5-aminolevulinate from L-glutamyl-tRNA(Glu): step 2/2. The chain is Glutamate-1-semialdehyde 2,1-aminomutase from Anaeromyxobacter sp. (strain Fw109-5).